Reading from the N-terminus, the 342-residue chain is Elongation factor Ts (342 aa).

An involved in Mg(2+) ion dislocation from EF-Tu region spans residues 80–83; the sequence is TDFV.

It belongs to the EF-Ts family.

Its subcellular location is the cytoplasm. In terms of biological role, associates with the EF-Tu.GDP complex and induces the exchange of GDP to GTP. It remains bound to the aminoacyl-tRNA.EF-Tu.GTP complex up to the GTP hydrolysis stage on the ribosome. This Lactobacillus delbrueckii subsp. bulgaricus (strain ATCC 11842 / DSM 20081 / BCRC 10696 / JCM 1002 / NBRC 13953 / NCIMB 11778 / NCTC 12712 / WDCM 00102 / Lb 14) protein is Elongation factor Ts.